The chain runs to 482 residues: UDP-N-acetylmuramoyl-L-alanyl-D-glutamate--2,6-diaminopimelate ligase (482 aa).

Positions 28 and 30 each coordinate UDP-N-acetyl-alpha-D-muramoyl-L-alanyl-D-glutamate. 108 to 114 (GTNGKTT) serves as a coordination point for ATP. UDP-N-acetyl-alpha-D-muramoyl-L-alanyl-D-glutamate is bound by residues 150–151 (TT), S177, Q183, and R185. K217 is subject to N6-carboxylysine. Meso-2,6-diaminopimelate-binding positions include R372, 396-399 (DNPR), G447, and E451. The Meso-diaminopimelate recognition motif signature appears at 396 to 399 (DNPR).

This sequence belongs to the MurCDEF family. MurE subfamily. Mg(2+) serves as cofactor. Post-translationally, carboxylation is probably crucial for Mg(2+) binding and, consequently, for the gamma-phosphate positioning of ATP.

It is found in the cytoplasm. The catalysed reaction is UDP-N-acetyl-alpha-D-muramoyl-L-alanyl-D-glutamate + meso-2,6-diaminopimelate + ATP = UDP-N-acetyl-alpha-D-muramoyl-L-alanyl-gamma-D-glutamyl-meso-2,6-diaminopimelate + ADP + phosphate + H(+). It functions in the pathway cell wall biogenesis; peptidoglycan biosynthesis. Catalyzes the addition of meso-diaminopimelic acid to the nucleotide precursor UDP-N-acetylmuramoyl-L-alanyl-D-glutamate (UMAG) in the biosynthesis of bacterial cell-wall peptidoglycan. This chain is UDP-N-acetylmuramoyl-L-alanyl-D-glutamate--2,6-diaminopimelate ligase, found in Aquifex aeolicus (strain VF5).